Reading from the N-terminus, the 339-residue chain is MVFYGQPRNEDGSISFSAEGTNSVFTVDLSRLKPDVQKVAFTVTCDGSHTVSSLNHLSIQIESGNTSLISGQVELSGRQEAALILGEVYRRNGDWKFVFIAQGFNGGLKPLAEYYGVNVADEPAPVTPPPAPPAPPKVSLSKVSLTKEKPAISLAKKANFGEIRINLNWHRGSGSGGLLGGMFGSNKAIDLDLGAFVELADGYKSVVQALGNAFGNYHSEPYVQMQGDDRTGEALDGEWLHINGREWKEIRQVLIYAFIYQGVPSWDKTDGVVTLHVPEQPPIESRLTEGDNKRTLCAIARLVNENGSIRVERINQYFRGQEEMDRAFGWGFRWSRGSK.

In terms of biological role, not yet known. The chain is Tellurium resistance protein TerA (terA) from Alcaligenes sp.